Here is a 179-residue protein sequence, read N- to C-terminus: Large ribosomal subunit protein uL5 (179 aa).

It belongs to the universal ribosomal protein uL5 family. Part of the 50S ribosomal subunit; part of the 5S rRNA/L5/L18/L25 subcomplex. Contacts the 5S rRNA and the P site tRNA. Forms a bridge to the 30S subunit in the 70S ribosome.

In terms of biological role, this is one of the proteins that bind and probably mediate the attachment of the 5S RNA into the large ribosomal subunit, where it forms part of the central protuberance. In the 70S ribosome it contacts protein S13 of the 30S subunit (bridge B1b), connecting the 2 subunits; this bridge is implicated in subunit movement. Contacts the P site tRNA; the 5S rRNA and some of its associated proteins might help stabilize positioning of ribosome-bound tRNAs. The protein is Large ribosomal subunit protein uL5 of Desulfotalea psychrophila (strain LSv54 / DSM 12343).